Reading from the N-terminus, the 904-residue chain is DNA mismatch repair protein MutS (904 aa).

638–645 (GPNMAGKS) contacts ATP. Residues 825 to 869 (KSKADGTRRPASYHEAQPLLPGMPEPPSTASAEPPQTVTPPEPPV) are disordered.

Belongs to the DNA mismatch repair MutS family.

This protein is involved in the repair of mismatches in DNA. It is possible that it carries out the mismatch recognition step. This protein has a weak ATPase activity. This chain is DNA mismatch repair protein MutS, found in Oleidesulfovibrio alaskensis (strain ATCC BAA-1058 / DSM 17464 / G20) (Desulfovibrio alaskensis).